We begin with the raw amino-acid sequence, 1112 residues long: DNA repair protein rad13 (1112 aa).

Residues 1–95 (MGVSGLWDIL…QTIQKRQARR (95 aa)) form an N-domain region. Residues aspartate 30 and aspartate 77 each coordinate Mg(2+). The UIM domain maps to 395 to 414 (TDDLILQLATQQSLEENKKS). The I-domain stretch occupies residues 742-870 (KRSEKRDADE…LALEILHEFP (129 aa)). Mg(2+)-binding residues include glutamate 777, glutamate 779, aspartate 798, aspartate 800, and aspartate 849. Residues 1056–1112 (KMMASKNSSDSDSDSEDNFLASLTPKTNSSSISIENLPRKTKLSTSLLKKPSKRRRK) are disordered. Residues 1079–1089 (TPKTNSSSISI) show a composition bias toward polar residues.

It belongs to the XPG/RAD2 endonuclease family. XPG subfamily. It depends on Mg(2+) as a cofactor.

It localises to the nucleus. Single-stranded DNA endonuclease involved in excision repair of DNA damaged with UV light, bulky adducts, or cross-linking agents. Essential for the incision step of excision-repair. This Schizosaccharomyces pombe (strain 972 / ATCC 24843) (Fission yeast) protein is DNA repair protein rad13 (rad13).